Reading from the N-terminus, the 703-residue chain is uncharacterized protein (703 aa).

Helical transmembrane passes span 23-43 (IAMS…DFLI), 69-89 (ALSG…AAGG), 143-163 (PVIS…ALEA), and 250-270 (PPEW…PIGL). Residues 23–335 (IAMSGAISAG…INNDPFEFVR (313 aa)) form the PNPLA domain. Residues 72 to 76 (GASAG) carry the GXSXG motif. Catalysis depends on Ser-74, which acts as the Nucleophile. The Proton acceptor role is filled by Asp-322. Positions 322–324 (DGG) match the DGA/G motif. Transmembrane regions (helical) follow at residues 357 to 377 (VIMI…EPPL), 432 to 452 (ETFS…LEAF), and 644 to 664 (ILST…APWT).

The protein resides in the cell membrane. This is an uncharacterized protein from Sinorhizobium fredii (strain NBRC 101917 / NGR234).